A 72-amino-acid chain; its full sequence is UPF0270 protein YheU (72 aa).

The protein belongs to the UPF0270 family.

The sequence is that of UPF0270 protein YheU from Escherichia coli (strain UTI89 / UPEC).